We begin with the raw amino-acid sequence, 570 residues long: MRSSKGGRGRQAAPKTAPTTVCYCDGKRELGSVEVVCSTCLKWFHGRCLKEFHELNSNGVPFMICYTFTCKQCRPTAEDWKAKKADLVQMCVTVLATLSAERLKADGKLSAEHVPEDFTYLSLKDEIVPYMNENWYMLTAIKQKKEWHQNLAPTLLKEKNIFVQHNDDDDLFALAEKNLSLLGPLHEAVKLIGKRPIERENREPRHIELPPIEGPKTRGASKRRHAEAPVTGKKQKLAADYSSTAAPNGVQIDIPFSKDNYRYYLTEVDPNVPEDPAWNQNQSSAYVIPSFHYRELLNPTVNVSSNDRAFQLSINGNSITGFEGYSMARASHGVSKGTWYFEVNFDDQPDDSHIRIGWSQSYASLQACVGYNKFSYGWRSKHGTKFHEAKGKKYHFGGFKQGDVLGCLIHLPVDKKLQIPANLPSEKYLPVSHKGFNLISFKANYFFEVQEESADIAKTLVEMPGSYIEFFHNGKSCGKAYENIYAGAYYPSISIFKSATATMNLGPKFRNLPRGATGIHARADEQQHEQTLSDMLYLVSKEVNLDHPPRVKREDDDDVKDIKKEIKQEI.

The PHD-type zinc-finger motif lies at 19 to 76; it reads TTVCYCDGKRELGSVEVVCSTCLKWFHGRCLKEFHELNSNGVPFMICYTFTCKQCRPT. The segment at 201-242 is disordered; the sequence is NREPRHIELPPIEGPKTRGASKRRHAEAPVTGKKQKLAADYS. The B30.2/SPRY domain maps to 270 to 468; it reads PNVPEDPAWN…TLVEMPGSYI (199 aa).

As to quaternary structure, component of the SET2 complex (also known as the SET1/COMPASS complex), which contains at least set-2, swd-2.1, cfp-1, rbbp-5, wdr-5.1, dpy-30 and ash-2. Within the complex, interacts with cfp-1 and wdr-5.1. In terms of tissue distribution, expressed in somatic and germline tissues (at protein level).

The protein resides in the nucleus. Functionally, component of the set-2/ash-2 histone methyltransferase (HMT) complex. Required for the di- and trimethylation at 'Lys-4' of histone H3, a mark associated with epigenetic transcriptional activation. Implicated in the epigenetic inheritance of lifespan over several generations. Functions as a transcriptional regulator. Acts in the germline to limit the longevity of the soma, probably by regulating a lipid metabolism pathway that signals from the germline to the intestine, thereby preventing accumulation of mono-unsaturated fatty acids. The polypeptide is Set1/Ash2 histone methyltransferase complex subunit ash-2 (Caenorhabditis elegans).